Reading from the N-terminus, the 302-residue chain is Capsid protein (302 aa).

The interval 217 to 302 is disordered; it reads FHSGDAAKQS…HSSPQQTPKK (86 aa). Residues 254–271 show a composition bias toward low complexity; it reads PRAGTPSSQKSGQSGQTT. Residues 288-302 show a composition bias toward polar residues; the sequence is HKSTPHSSPQQTPKK.

Its subcellular location is the virion. Capsid protein self-assembles to form a flexuous, filamentous capsid (Potential). The capsid encapsulates the single-stranded RNA genome. The protein is Capsid protein of Botryotinia fuckeliana (Noble rot fungus).